A 175-amino-acid polypeptide reads, in one-letter code: uncharacterized protein (175 aa).

The N-terminal 11 residues, Met-1–Asn-11, are a transit peptide targeting the mitochondrion. Residues Gln-29–Asn-48 are disordered.

It is found in the mitochondrion. This is an uncharacterized protein from Mus musculus (Mouse).